Here is a 168-residue protein sequence, read N- to C-terminus: MSVTLHTNVGDIKVEVFCDATPRAAENFLGHCAAGTYNDVKWHRNIKSFMIQTGDPTGTGKGGQSIWGKPFADEIRSSLKFDRRGIVACANAGPDTNKSQFFITYAKQPHLDGKYTIIGKVIDGAEDGGTLDAMEAIPVDAKNRPTSEIRMTGVTVHANPIAIKAAGK.

The PPIase cyclophilin-type domain maps to 1 to 156 (MSVTLHTNVG…SEIRMTGVTV (156 aa)).

Belongs to the cyclophilin-type PPIase family. PPIL3 subfamily.

The catalysed reaction is [protein]-peptidylproline (omega=180) = [protein]-peptidylproline (omega=0). Functionally, PPIases accelerate the folding of proteins. It catalyzes the cis-trans isomerization of proline imidic peptide bonds in oligopeptides. This Mycosarcoma maydis (Corn smut fungus) protein is Peptidyl-prolyl cis-trans isomerase-like 3 (CYP10).